The sequence spans 507 residues: FAD-linked oxidoreductase OXR1 (507 aa).

A signal peptide spans 1–21; sequence MTIKFASLILAGLGLGSGALG. Asn-34 and Asn-65 each carry an N-linked (GlcNAc...) asparagine glycan. Residues 73–245 enclose the FAD-binding PCMH-type domain; the sequence is YAPPTFKVSV…VSATYKLKPL (173 aa). 2 N-linked (GlcNAc...) asparagine glycosylation sites follow: Asn-263 and Asn-288.

Belongs to the oxygen-dependent FAD-linked oxidoreductase family. It depends on FAD as a cofactor.

The catalysed reaction is dihydropyriculol + A = pyriculol + AH2. It catalyses the reaction dihydropyriculariol + A = pyriculariol + AH2. Its pathway is polyketide biosynthesis. FAD-linked oxidoreductase; part of the gene cluster that mediates the biosynthesis of pyriculol and pyriculariol, two heptaketides that induce lesion formation upon application on rice leaves but are dispensable for pathogenicity. The highly reducing polyketide synthase synthesizes the heptaketide backbone of pyriculol and pyriculariol. Pyriculol and pyriculariol contain several hydroxyl moieties and double bonds, so it can be assumed that several reduction steps occur during biosynthesis. These reactions could be executed by PKS19 itself or partly by the tailoring enzymes OXR1, OXR2, RED1, RED2 or RED3, identified within the cluster. The FAD-linked oxidoreductase OXR1 is the only tailoring enzyme for which the function has been determined yet, and is involved in the oxidation of dihydropyriculol and dihydropyriculariol into pyriculol and pyriculariol, respectively. This Pyricularia oryzae (strain 70-15 / ATCC MYA-4617 / FGSC 8958) (Rice blast fungus) protein is FAD-linked oxidoreductase OXR1.